A 526-amino-acid polypeptide reads, in one-letter code: Lysine--tRNA ligase (526 aa).

Residues Glu431 and Glu438 each contribute to the Mg(2+) site.

Belongs to the class-II aminoacyl-tRNA synthetase family. Homodimer. The cofactor is Mg(2+).

It is found in the cytoplasm. It carries out the reaction tRNA(Lys) + L-lysine + ATP = L-lysyl-tRNA(Lys) + AMP + diphosphate. The sequence is that of Lysine--tRNA ligase from Chlamydia felis (strain Fe/C-56) (Chlamydophila felis).